The chain runs to 156 residues: Calglandulin (156 aa).

EF-hand domains follow at residues 8-43 (EQITEYKGIFEMFDEEGNGLVKTDDLESLMSLIGIN), 44-79 (PTKRDLANMAKDVDKDKKGTFNCDGFLVLMGIYHEK), 82-117 (NQDEELRAAFKVFDKEHKGYIEWDTLKYVLMNAGEP), and 118-153 (LNEHEAELMMKEADKDGDGTIDYEEFVAMMTGESFK). D131, D133, D135, T137, and E142 together coordinate Ca(2+).

The protein belongs to the calmodulin family. Calglandulin subfamily. As to expression, expressed by the venom gland.

The protein resides in the cytoplasm. May be involved in the cellular control mechanism of the secretion of toxins from the gland into the venom. This is Calglandulin from Hoplocephalus stephensii (Stephens's banded snake).